The sequence spans 151 residues: Ribosome maturation factor RimP (151 aa).

This sequence belongs to the RimP family.

It is found in the cytoplasm. In terms of biological role, required for maturation of 30S ribosomal subunits. The sequence is that of Ribosome maturation factor RimP from Halorhodospira halophila (strain DSM 244 / SL1) (Ectothiorhodospira halophila (strain DSM 244 / SL1)).